We begin with the raw amino-acid sequence, 147 residues long: 6,7-dimethyl-8-ribityllumazine synthase (147 aa).

Residues phenylalanine 16, 48-50, and 73-75 each bind 5-amino-6-(D-ribitylamino)uracil; these read TFD and AVI. Position 78–79 (78–79) interacts with (2S)-2-hydroxy-3-oxobutyl phosphate; sequence DT. Histidine 81 (proton donor) is an active-site residue. Leucine 106 contacts 5-amino-6-(D-ribitylamino)uracil. Residue arginine 121 coordinates (2S)-2-hydroxy-3-oxobutyl phosphate.

This sequence belongs to the DMRL synthase family.

The catalysed reaction is (2S)-2-hydroxy-3-oxobutyl phosphate + 5-amino-6-(D-ribitylamino)uracil = 6,7-dimethyl-8-(1-D-ribityl)lumazine + phosphate + 2 H2O + H(+). The protein operates within cofactor biosynthesis; riboflavin biosynthesis; riboflavin from 2-hydroxy-3-oxobutyl phosphate and 5-amino-6-(D-ribitylamino)uracil: step 1/2. Catalyzes the formation of 6,7-dimethyl-8-ribityllumazine by condensation of 5-amino-6-(D-ribitylamino)uracil with 3,4-dihydroxy-2-butanone 4-phosphate. This is the penultimate step in the biosynthesis of riboflavin. The chain is 6,7-dimethyl-8-ribityllumazine synthase from Aeropyrum pernix (strain ATCC 700893 / DSM 11879 / JCM 9820 / NBRC 100138 / K1).